Consider the following 236-residue polypeptide: Sensory rhodopsin I (236 aa).

Helical transmembrane passes span 6 to 26 (VVYGITAAGFAVGVAIVGFLY), 37 to 57 (ILAALALIPGVAGISYVAMVF), 74 to 94 (YLDWVVTTPLLVGFIGYTAGA), 98 to 118 (AIFGVMAADALMILAGVGAVV), 126 to 146 (ALFGVSAVFHISLFAYLYLIF), 167 to 187 (VGLLWIAYPLVWLAGPEGLGF), and 192 to 212 (GVSITYAFLDLLAKVPYVYFF). Position 205 is an N6-(retinylidene)lysine (K205).

It belongs to the archaeal/bacterial/fungal opsin family. Interacts with Htr1. Post-translationally, the covalent binding of retinal to the apoprotein, bacterioopsin, generates bacteriorhodopsin.

The protein localises to the membrane. Its function is as follows. Photoattractant rhodopsin. The polypeptide is Sensory rhodopsin I (sop1) (Haloarcula marismortui (strain ATCC 43049 / DSM 3752 / JCM 8966 / VKM B-1809) (Halobacterium marismortui)).